Here is a 56-residue protein sequence, read N- to C-terminus: Large ribosomal subunit protein bL33 (56 aa).

The protein belongs to the bacterial ribosomal protein bL33 family.

This Vibrio vulnificus (strain YJ016) protein is Large ribosomal subunit protein bL33.